A 269-amino-acid chain; its full sequence is Tetrahydromethanopterin S-methyltransferase subunit C (269 aa).

Helical transmembrane passes span 18–38, 39–59, 62–82, 84–104, 106–126, 152–172, 180–200, and 222–242; these read VLVI…FVPS, LAML…ANTT, VAAY…LGMG, ISAL…ALPF, LVLA…FIVG, ALAI…DLII, IIAL…NACI, and LVFS…VFWI.

It belongs to the MtrC family. The complex is composed of 8 subunits; MtrA, MtrB, MtrC, MtrD, MtrE, MtrF, MtrG and MtrH.

The protein localises to the cell membrane. The enzyme catalyses 5-methyl-5,6,7,8-tetrahydromethanopterin + coenzyme M + 2 Na(+)(in) = 5,6,7,8-tetrahydromethanopterin + methyl-coenzyme M + 2 Na(+)(out). It functions in the pathway one-carbon metabolism; methanogenesis from CO(2); methyl-coenzyme M from 5,10-methylene-5,6,7,8-tetrahydromethanopterin: step 2/2. In terms of biological role, part of a complex that catalyzes the formation of methyl-coenzyme M and tetrahydromethanopterin from coenzyme M and methyl-tetrahydromethanopterin. This is an energy-conserving, sodium-ion translocating step. The chain is Tetrahydromethanopterin S-methyltransferase subunit C from Methanococcus vannielii (strain ATCC 35089 / DSM 1224 / JCM 13029 / OCM 148 / SB).